A 337-amino-acid chain; its full sequence is DNA-directed RNA polymerase subunit alpha (337 aa).

Residues Met1 to Glu233 form an alpha N-terminal domain (alpha-NTD) region. Positions Gly266–Ile337 are alpha C-terminal domain (alpha-CTD).

This sequence belongs to the RNA polymerase alpha chain family. As to quaternary structure, in plastids the minimal PEP RNA polymerase catalytic core is composed of four subunits: alpha, beta, beta', and beta''. When a (nuclear-encoded) sigma factor is associated with the core the holoenzyme is formed, which can initiate transcription.

The protein localises to the plastid. Its subcellular location is the chloroplast. The catalysed reaction is RNA(n) + a ribonucleoside 5'-triphosphate = RNA(n+1) + diphosphate. In terms of biological role, DNA-dependent RNA polymerase catalyzes the transcription of DNA into RNA using the four ribonucleoside triphosphates as substrates. The sequence is that of DNA-directed RNA polymerase subunit alpha from Dioscorea elephantipes (Elephant's foot yam).